Here is a 655-residue protein sequence, read N- to C-terminus: DNA mismatch repair protein MutL (655 aa).

Disordered stretches follow at residues 357–416 and 439–460; these read EKKQ…DDYT and DFDS…SKDP. Over residues 371-383 the composition is skewed to basic and acidic residues; the sequence is SHEEDEKNDDKAY. Over residues 402–416 the composition is skewed to polar residues; sequence NTSVSTSPNSDDDYT.

It belongs to the DNA mismatch repair MutL/HexB family.

Functionally, this protein is involved in the repair of mismatches in DNA. It is required for dam-dependent methyl-directed DNA mismatch repair. May act as a 'molecular matchmaker', a protein that promotes the formation of a stable complex between two or more DNA-binding proteins in an ATP-dependent manner without itself being part of a final effector complex. This Staphylococcus saprophyticus subsp. saprophyticus (strain ATCC 15305 / DSM 20229 / NCIMB 8711 / NCTC 7292 / S-41) protein is DNA mismatch repair protein MutL.